A 96-amino-acid polypeptide reads, in one-letter code: U-scoloptoxin(06)-Sm1a (96 aa).

The signal sequence occupies residues 1 to 23; the sequence is MNSFSFFLVIFVVLNLQVAKLMA.

The protein belongs to the scoloptoxin-06 family. Post-translationally, contains 2 disulfide bonds. In terms of tissue distribution, expressed by the venom gland.

It localises to the secreted. In Scolopendra morsitans (Tanzanian blue ringleg centipede), this protein is U-scoloptoxin(06)-Sm1a.